A 192-amino-acid polypeptide reads, in one-letter code: CASP-like protein 4C1 (192 aa).

Positions 1–11 are enriched in polar residues; the sequence is MRSPQSLRNGE. The segment at 1-23 is disordered; the sequence is MRSPQSLRNGETPSPSPRPPRFP. Over 1 to 40 the chain is Cytoplasmic; sequence MRSPQSLRNGETPSPSPRPPRFPTPHFHSTVSLQKLKRFN. Residues 14–23 are compositionally biased toward pro residues; that stretch reads SPSPRPPRFP. The chain crosses the membrane as a helical span at residues 41–61; it reads LLILVFRLSTFCFSLASSVFM. Residues 62–75 are Extracellular-facing; sequence LTNPTWYHFDAFRY. Residues 76–96 traverse the membrane as a helical segment; sequence VFAANAIVAIYSLFEMAASVW. Topologically, residues 97–107 are cytoplasmic; it reads EISRGNTLFPE. Residues 108-128 form a helical membrane-spanning segment; sequence ILQVWFDFGHDQVFAYLLLSA. Residues 129–156 lie on the Extracellular side of the membrane; it reads DSAATALAKTLKGGDTCAASNAFCVQSY. A helical membrane pass occupies residues 157 to 177; it reads IAIALGFAGFLFLGLSSLLSG. Topologically, residues 178 to 192 are cytoplasmic; the sequence is FRVVCFLINGSRFYV.

This sequence belongs to the Casparian strip membrane proteins (CASP) family. As to quaternary structure, homodimer and heterodimers.

It is found in the cell membrane. This is CASP-like protein 4C1 from Ricinus communis (Castor bean).